The chain runs to 630 residues: SHC-transforming protein 4 (630 aa).

The interval 1–185 (MRERGQDSLA…RQDRHFLQHL (185 aa)) is CH2. Disordered stretches follow at residues 39–80 (TSLD…QESP) and 118–150 (KLQESRDPGSSGPSSPETSLSRSGTAPPPQQDL). A compositionally biased stretch (low complexity) spans 125 to 142 (PGSSGPSSPETSLSRSGT). Residues 186–369 (LGMGMNYCVR…VHIDSHAEER (184 aa)) enclose the PID domain. The segment at 370-525 (EDHEYYNEIP…HIKQQLWSEE (156 aa)) is CH1. At Tyr424 the chain carries Phosphotyrosine. Composition is skewed to polar residues over residues 471–486 (LQSTPGSAGNQRSAQP) and 502–513 (PGATAQPASSHS). Residues 471-514 (LQSTPGSAGNQRSAQPLGSPWHCGKAPETVQPGATAQPASSHSL) are disordered. An SH2 domain is found at 526–617 (CYHGKLSRKA…GSEVSLKQPV (92 aa)).

As to quaternary structure, interacts (via PID domain) with phosphorylated MUSK (via NPXY motif); undergoes tyrosine phosphorylation downstream of activated MUSK. Interacts with GRB2; the interaction is dependent of Tyr-424 phosphorylation and increased by EGF. Phosphorylated; the phosphorylation is enhanced by EGF. Phosphorylation at Tyr-424 is required for the interaction with GRB2. As to expression, only expressed in melanomas. Weakly expressed in normal melanocytes and benign nevi. Highly expressed at the transition from radial growth phase to vertical growth phase and metastatic melanomas, when tumor cells acquire migratory competence and invasive potential.

It localises to the postsynaptic cell membrane. In terms of biological role, activates both Ras-dependent and Ras-independent migratory pathways in melanomas. Contributes to the early phases of agrin-induced tyrosine phosphorylation of CHRNB1. This Homo sapiens (Human) protein is SHC-transforming protein 4 (SHC4).